A 603-amino-acid chain; its full sequence is uncharacterized protein (603 aa).

Positions 257-281 (AGEAASSDHDQKISRVTRKRPREPK) are disordered.

This is an uncharacterized protein from Saccharomyces cerevisiae (strain ATCC 204508 / S288c) (Baker's yeast).